We begin with the raw amino-acid sequence, 239 residues long: RNA polymerase sigma factor FliA (239 aa).

A sigma-70 factor domain-2 region spans residues 16–88; sequence LWQRYVPLVR…MLDELRSRDW (73 aa). The Interaction with polymerase core subunit RpoC signature appears at 43–46; the sequence is DLLQ. The tract at residues 96-166 is sigma-70 factor domain-3; sequence NAREVAQAIG…IELVTDDHQR (71 aa). Residues 185-233 are sigma-70 factor domain-4; it reads AIETLPEREKLVLTLYYQEELNLKEIGAVLEVGESRVSQLHSQAIKRLR. The H-T-H motif DNA-binding region spans 207 to 226; that stretch reads LKEIGAVLEVGESRVSQLHS.

The protein belongs to the sigma-70 factor family. FliA subfamily.

Its subcellular location is the cytoplasm. In terms of biological role, sigma factors are initiation factors that promote the attachment of RNA polymerase to specific initiation sites and are then released. This sigma factor controls the expression of flagella-related genes. In Escherichia coli O157:H7, this protein is RNA polymerase sigma factor FliA.